A 147-amino-acid chain; its full sequence is Hemoglobin subunit beta-1/2 (147 aa).

Val2 carries the post-translational modification N-acetylvaline. In terms of domain architecture, Globin spans 3–147 (HLSSEEKSAV…VANALAHKYH (145 aa)). Thr13 is subject to Phosphothreonine. Residue Ser45 is modified to Phosphoserine. Position 60 is an N6-acetyllysine (Lys60). Residue His64 coordinates heme b. Lys83 is subject to N6-acetyllysine. His93 serves as a coordination point for heme b. Cys94 is subject to S-nitrosocysteine. Residue Lys145 is modified to N6-acetyllysine.

The protein belongs to the globin family. As to quaternary structure, heterotetramer of two alpha chains and two beta chains. As to expression, red blood cells.

In terms of biological role, involved in oxygen transport from the lung to the various peripheral tissues. This Oryctolagus cuniculus (Rabbit) protein is Hemoglobin subunit beta-1/2 (HBB1).